We begin with the raw amino-acid sequence, 189 residues long: MIDDITAQLRAGRQVLEALERELAGRIASFAELLADSLAGGRKLLVMGNGGSAADAQHFAAEIVGRFKLERRGLPAVALTTDTSILTAIGNDYGFDAIFRRQVEALADEGDVVVGISTSGNSRNVQEALLLARERGCRTIGLLGRDGGSIRDIVDLDLTVPSADTPRIQEGHITIIHIVCDLVEKRLFP.

The region spanning 34–189 (LADSLAGGRK…CDLVEKRLFP (156 aa)) is the SIS domain. Residue 49-51 (NGG) participates in substrate binding. The Zn(2+) site is built by H58 and E62. Substrate contacts are provided by residues E62, 91 to 92 (ND), 117 to 119 (STS), S122, and Q169. Positions 169 and 177 each coordinate Zn(2+).

It belongs to the SIS family. GmhA subfamily. As to quaternary structure, homotetramer. Requires Zn(2+) as cofactor.

It is found in the cytoplasm. It carries out the reaction 2 D-sedoheptulose 7-phosphate = D-glycero-alpha-D-manno-heptose 7-phosphate + D-glycero-beta-D-manno-heptose 7-phosphate. It functions in the pathway carbohydrate biosynthesis; D-glycero-D-manno-heptose 7-phosphate biosynthesis; D-glycero-alpha-D-manno-heptose 7-phosphate and D-glycero-beta-D-manno-heptose 7-phosphate from sedoheptulose 7-phosphate: step 1/1. Functionally, catalyzes the isomerization of sedoheptulose 7-phosphate in D-glycero-D-manno-heptose 7-phosphate. In Geobacter sulfurreducens (strain ATCC 51573 / DSM 12127 / PCA), this protein is Phosphoheptose isomerase.